The chain runs to 314 residues: DNA-directed RNA polymerase subunit alpha (314 aa).

The segment at 1–228 is alpha N-terminal domain (alpha-NTD); that stretch reads MIEFEKPKIH…EHLAIFVNLN (228 aa). The interval 245–314 is alpha C-terminal domain (alpha-CTD); it reads KEKMLEMTIE…LLGLGFRSED (70 aa).

It belongs to the RNA polymerase alpha chain family. Homodimer. The RNAP catalytic core consists of 2 alpha, 1 beta, 1 beta' and 1 omega subunit. When a sigma factor is associated with the core the holoenzyme is formed, which can initiate transcription.

The enzyme catalyses RNA(n) + a ribonucleoside 5'-triphosphate = RNA(n+1) + diphosphate. Its function is as follows. DNA-dependent RNA polymerase catalyzes the transcription of DNA into RNA using the four ribonucleoside triphosphates as substrates. The chain is DNA-directed RNA polymerase subunit alpha from Pediococcus pentosaceus (strain ATCC 25745 / CCUG 21536 / LMG 10740 / 183-1w).